A 290-amino-acid polypeptide reads, in one-letter code: Bifunctional protein FolD 1 (290 aa).

Residues 172–174 (GAS) and I238 each bind NADP(+).

Belongs to the tetrahydrofolate dehydrogenase/cyclohydrolase family. Homodimer.

It carries out the reaction (6R)-5,10-methylene-5,6,7,8-tetrahydrofolate + NADP(+) = (6R)-5,10-methenyltetrahydrofolate + NADPH. The enzyme catalyses (6R)-5,10-methenyltetrahydrofolate + H2O = (6R)-10-formyltetrahydrofolate + H(+). The protein operates within one-carbon metabolism; tetrahydrofolate interconversion. In terms of biological role, catalyzes the oxidation of 5,10-methylenetetrahydrofolate to 5,10-methenyltetrahydrofolate and then the hydrolysis of 5,10-methenyltetrahydrofolate to 10-formyltetrahydrofolate. In Pseudomonas putida (strain GB-1), this protein is Bifunctional protein FolD 1.